The following is a 799-amino-acid chain: Zinc finger protein 227 (799 aa).

A KRAB domain is found at 23-94; sequence VTFKDVAVVF…ETETQRSSKH (72 aa). C2H2-type zinc fingers lie at residues 250–272, 269–291, 324–346, 352–374, 380–402, 408–430, 436–458, 464–486, 492–514, 520–542, 548–570, 576–598, 604–626, 632–654, 660–682, 688–710, 716–738, 744–766, and 772–794; these read HPCG…PNVH, PNVH…QRIH, YRCD…YRTH, YKCE…QRVH, YKCD…RRVH, YKCE…FRVH, YKCK…QNVH, FKCE…QRVH, YRCD…QVIH, YKCG…QRVH, YKCD…QRGH, HICE…LGVH, and YKCD…QKVH.

The protein belongs to the krueppel C2H2-type zinc-finger protein family.

It localises to the nucleus. In terms of biological role, may be involved in transcriptional regulation. The polypeptide is Zinc finger protein 227 (ZNF227) (Homo sapiens (Human)).